We begin with the raw amino-acid sequence, 235 residues long: Fms-related tyrosine kinase 3 ligand (235 aa).

The signal sequence occupies residues 1–26; the sequence is MTVLAPAWSPTTYLLLLLLLSSGLSG. The Extracellular segment spans residues 27–184; sequence TQDCSFQHSP…EATAPTAPQP (158 aa). Disulfide bonds link Cys30/Cys111, Cys70/Cys153, and Cys119/Cys158. N-linked (GlcNAc...) asparagine glycosylation is found at Asn126 and Asn149. A helical transmembrane segment spans residues 185-205; the sequence is PLLLLLLLPVGLLLLAAAWCL. The Cytoplasmic segment spans residues 206–235; that stretch reads HWQRTRRRTPRPGEQVPPVPSPQDLLLVEH. The segment at 213–235 is disordered; it reads RTPRPGEQVPPVPSPQDLLLVEH.

Homodimer (isoform 2).

It localises to the cell membrane. The protein localises to the secreted. In terms of biological role, stimulates the proliferation of early hematopoietic cells by activating FLT3. Synergizes well with a number of other colony stimulating factors and interleukins. Required for the development of B cells, and dendritic cells (DCs). This chain is Fms-related tyrosine kinase 3 ligand (FLT3LG), found in Homo sapiens (Human).